The chain runs to 418 residues: Endoglucanase EG-II (418 aa).

The first 21 residues, 1–21, serve as a signal peptide directing secretion; it reads MNKSVAPLLLAASILYGGAVA. The residue at position 22 (glutamine 22) is a Pyrrolidone carboxylic acid. Residues 22–57 form the CBM1 domain; the sequence is QQTVWGQCGGIGWSGPTNCAPGSACSTLNPYYAQCI. The segment at 58–91 is linker; sequence PGATTITTSTRPPSGPTTTTRATSTSSSTPPTSS. The disordered stretch occupies residues 63–91; that stretch reads ITTSTRPPSGPTTTTRATSTSSSTPPTSS. The tract at residues 92–418 is catalytic; the sequence is GVRFAGVNIA…SLVSSCLARK (327 aa). An intrachain disulfide couples cysteine 107 to cysteine 113. Asparagine 124 is a glycosylation site (N-linked (GlcNAc) asparagine). A disulfide bridge links cysteine 183 with cysteine 190. Catalysis depends on glutamate 239, which acts as the Proton donor/acceptor. 2 disulfides stabilise this stretch: cysteine 323–cysteine 359 and cysteine 364–cysteine 414. Glutamate 350 serves as the catalytic Nucleophile.

It belongs to the glycosyl hydrolase 5 (cellulase A) family.

The protein localises to the secreted. The catalysed reaction is Endohydrolysis of (1-&gt;4)-beta-D-glucosidic linkages in cellulose, lichenin and cereal beta-D-glucans.. Its function is as follows. Endoglucanase (EG) that cleaves the internal beta-1,4-glucosidic bonds in cellulose. The degradation of cellulose involves an interplay between different cellulolytic enzymes. Hydrolysis starts with EGs, which cut internal glycosidic linkages to reduce the polymerization degree of the substrate and creates new chain ends for exocellobiohydrolases (CBHs). The CBH release the disaccharide cellobiose from the non-reducing end of the cellulose polymer chain. Finally, beta-1,4-glucosidases hydrolyze the cellobiose and other short cello-oligosaccharides into glucose units. The protein is Endoglucanase EG-II (egl2) of Hypocrea jecorina (Trichoderma reesei).